The primary structure comprises 329 residues: 4-hydroxythreonine-4-phosphate dehydrogenase (329 aa).

Positions 136 and 137 each coordinate substrate. The a divalent metal cation site is built by histidine 166, histidine 211, and histidine 266. Positions 274, 283, and 292 each coordinate substrate.

This sequence belongs to the PdxA family. Homodimer. Zn(2+) serves as cofactor. The cofactor is Mg(2+). Requires Co(2+) as cofactor.

The protein resides in the cytoplasm. The enzyme catalyses 4-(phosphooxy)-L-threonine + NAD(+) = 3-amino-2-oxopropyl phosphate + CO2 + NADH. It functions in the pathway cofactor biosynthesis; pyridoxine 5'-phosphate biosynthesis; pyridoxine 5'-phosphate from D-erythrose 4-phosphate: step 4/5. Catalyzes the NAD(P)-dependent oxidation of 4-(phosphooxy)-L-threonine (HTP) into 2-amino-3-oxo-4-(phosphooxy)butyric acid which spontaneously decarboxylates to form 3-amino-2-oxopropyl phosphate (AHAP). In Escherichia coli (strain 55989 / EAEC), this protein is 4-hydroxythreonine-4-phosphate dehydrogenase.